The chain runs to 142 residues: Transcriptional regulator MraZ (142 aa).

SpoVT-AbrB domains follow at residues 5 to 47 (THSP…SERE) and 76 to 119 (ASDE…DAQA).

Belongs to the MraZ family. As to quaternary structure, forms oligomers.

Its subcellular location is the cytoplasm. The protein localises to the nucleoid. The sequence is that of Transcriptional regulator MraZ from Arthrobacter sp. (strain FB24).